Here is a 2187-residue protein sequence, read N- to C-terminus: MPGEATETVPATEQELPQPQAETAVLPMSSALKVAAVGQPGPTPPSSLGPQQSPIVTAHQPSPLPSSVSSTPFEVPFAQPITAETALPSGTAPPTPTFLPHLIGPPISPAALALASPMIGLAQKGARSSSAPLSLVALAPHSVQKSSVCPPHPLTSPPSAAGAELGALTASIPPLEPKTSTSQVPSQGTLNLKGTAPCPPDVVRAFPSHLENPLASVQPGLMSCPQTLSNTSPVKGVPISSALTQSRLSLNLKGPVSPPARNTAAPSIPLAPSTSLGCHLPLLHHSSVDSPIQPPGQSGLAVSNPTSVGHSGIAASCPPERCVVPALPSRLLAVDSGAAPSDDKGSSAVTNELCSPPGSSNVAGTSLSPKASLVPKGSNVALQPLVTQVPASQKTGLKEIPVSCIGATHHALDNPSAISVAPATHVPPPTSSGLVSSKDPASPVTSLVVPAAHKQFPAPPASATLGVPVSPLPATEGLKNLPISALVNVGAPVSPAQAGLPTRKDTTLQPLAPIALKESPSSQSASSLEVLSEDTVTKKTTGGPAPVVRPAIAGVATTTSLRADSPPAVIRADSCVSPNTVSQPLKRSVTDPAMAPRTAKNTAPSTTSPLVPLASEGCPVASSMALSPQNASVSETALALSPEIPKSVPFPDPPLAEISFSNARKVDAVSHMESSGSSRQGHPDASVTAKGTVVCLADSSLDTSVSASKGSALSGASSPLYPLEVSFLPEAGLAVQGPKGSLNKLSPTPPSSKGAPVPSTGAPPSPKGAPIVPTESSISSKQVPAEILPSPQKTPEVTASRLISAVQSPKVDPIMSDVTPTSPKKTSATAVPKDTSATLSLKSVPAVTSLSPPKAPVAPSNEATIVPTEIPTSLKNALAAATPKETLATSIPKVTSPSPQKTPKSVSLKGAPAMTSKKATEIAASKDVSPSQFPKEVPLLPHVPPTSPPKSPVSDTLSGALTSPPPKGPPATLAETPTYPKKSPKPAASKKTPATPSPEGVTAVPLEIPPCSKKAPKTAAPKESSATSSSKRAPKTAVSKEIPSKGVTAVPLEISLPLKETSKSATPGEKSASSPKRSPKTAGPKETPPGGVTAVPPEISLPPKETPQNATPNESLAASSQKRSPKTSVPKETPPGGVTAMPLEIPSAPQKAPKTAVPKQIPTPEDAVTILAGSPLSPKKASKTAAPKEAPATPSVGVIAVSGEISPSPKKTSKTAAPKENSATLPPKRSPKTAAPKETPATSSEGVTAVPSEISPSPPTPASKGVPVTLTPKGAPNALAESPASPKKVPKTAAPEETSTTPSPQKIPKVAGPKEASATPPSKKTPKTAVPKETSAPSEGVTAVPLEIPPSPRKAPKTAAPKETPAPSPEGATTAPVQIPPSPRKGSKKAGSKETPTTPSPEGVTAAPLEIPISSKKTSKMASPKETLVTPSSKKLSQTVGPKETSLEGATAVPLEIPPSHKKAPKTVDPKQVPLTPSPKDAPTTLAESPSSPKKAPKTAAPPSERVTTVPPEKPATPQKASATTASKVPVPAETQEVAVSSRETPVTPAVPPVKNPSSHKKTSKTIELKEAPATLPPSPTKSPKIPSSKKAPRTSAPKEFPASPSIKPVTTSLAQTAPPSLQKAPSTTIPKENLAAPAVLPVSSKSPAAPAAASASLSPATAAPQTAPKEATTIPSCKKAAATETPIETSTAPSLEGAPKETSETSVSKVLMSSPPKKASSSKRASTLPATTLPSLKEASVLSPTATSSGKDSHISPVSDACSTGTTTPQASEKLPSKKGPTAFTEMLAAPAPESALAITAPIQKSPGANSNSASSPKCPDPSSKKDTKGLPSAVALAPQTVPVEKDTSKAIETLLVSPAKGSDCLHSPKGPVGSQVATPLAAFTSDKVPPEAVSASVAPKPAPAASLTLAPSPVAPLPPKQPLLESAPGSVLESPSKLPVPAEEDELPPLIPPEAVSGGEPFQPILVNMPAPKPAGTPAPAPSAKQPVLKNNKGSGTESDSDESVPELEEQDSTQTATQQAQLAAAAEIDEEPVSKAKQSRSEKKARKAMSKLGLRQVTGVTRVTIRKSKNILFVITKPDVYKSPASDTYIVFGEAKIEDLSQQAQLAAAEKFKVQGEAVSNIQENTQTPTVQEESEEEEVDETGVEVKDIELVMSQANVSRAKAVRALKNNSNDIVNAIMELTM.

3 disordered regions span residues 1–20, 32–73, and 172–196; these read MPGE…PQPQ, LKVA…STPF, and IPPL…KGTA. Polar residues predominate over residues 9–20; the sequence is VPATEQELPQPQ. Over residues 178–192 the composition is skewed to polar residues; sequence KTSTSQVPSQGTLNL. At R247 the chain carries Asymmetric dimethylarginine. Disordered regions lie at residues 335–370, 579–611, 738–835, 884–1847, and 1892–2053; these read DSGA…LSPK, NTVS…SPLV, PKGS…PKDT, KETL…PVEK, and PEAV…KAMS. A compositionally biased stretch (polar residues) spans 347–369; it reads SAVTNELCSPPGSSNVAGTSLSP. Position 590 is a phosphothreonine (T590). Polar residues-rich tracts occupy residues 599-609, 818-835, and 887-905; these read AKNTAPSTTSP, VTPT…PKDT, and LATS…TPKS. Residue S822 is modified to Phosphoserine. Positions 941–951 are enriched in pro residues; it reads PHVPPTSPPKS. A compositionally biased stretch (low complexity) spans 976-998; that stretch reads TPTYPKKSPKPAASKKTPATPSP. Residues 1106 to 1122 show a composition bias toward polar residues; sequence TPQNATPNESLAASSQK. S1174 and S1177 each carry phosphoserine. Residues 1174–1195 are compositionally biased toward low complexity; that stretch reads SPLSPKKASKTAAPKEAPATPS. The residue at position 1364 (T1364) is a Phosphothreonine. Residues S1368 and S1392 each carry the phosphoserine modification. The residue at position 1398 (T1398) is a Phosphothreonine. A phosphoserine mark is found at S1400 and S1423. Residues 1429–1440 are compositionally biased toward polar residues; sequence VTPSSKKLSQTV. Low complexity predominate over residues 1489-1504; the sequence is SPSSPKKAPKTAAPPS. S1492 carries the post-translational modification Phosphoserine. The span at 1609–1631 shows a compositional bias: polar residues; it reads PVTTSLAQTAPPSLQKAPSTTIP. Low complexity-rich tracts occupy residues 1636-1670 and 1714-1727; these read AAPA…TAPK and SSPP…KRAS. The span at 1762-1772 shows a compositional bias: polar residues; it reads ACSTGTTTPQA. Composition is skewed to low complexity over residues 1806–1823 and 1892–1914; these read KSPG…CPDP and PEAV…LAPS. Residues 1950–1954 carry the PXLXP motif; sequence PPLIP. Residues 1973–1983 show a composition bias toward pro residues; that stretch reads APKPAGTPAPA. Acidic residues predominate over residues 2001–2014; the sequence is SDSDESVPELEEQD. Position 2015 is a phosphoserine; by ILK1 (S2015). Positions 2016-2029 are enriched in low complexity; the sequence is TQTATQQAQLAAAA. The tract at residues 2041 to 2052 is required for DNA-binding; the sequence is QSRSEKKARKAM. The region spanning 2042-2107 is the NAC-A/B domain; that stretch reads SRSEKKARKA…AKIEDLSQQA (66 aa). A Phosphoserine modification is found at S2104. Position 2114 is an N6-acetyllysine; alternate (K2114). K2114 is covalently cross-linked (Glycyl lysine isopeptide (Lys-Gly) (interchain with G-Cter in SUMO2); alternate). At T2131 the chain carries Phosphothreonine; by GSK3-beta. T2133 is modified (phosphothreonine). Residues S2138, S2158, S2163, and S2175 each carry the phosphoserine modification. The region spanning 2148–2185 is the UBA domain; it reads VEVKDIELVMSQANVSRAKAVRALKNNSNDIVNAIMEL.

The protein belongs to the NAC-alpha family. As to quaternary structure, interacts (via PXLXP motif) with the muscle-restricted histone methyltransferase SMYD1 (via MYND-type zinc finger). Post-translationally, phosphorylation of Ser-2015 by ILK during cell adhesion may promote nuclear localization. Phosphorylation of Thr-2131 by GSK3B may promote proteasome mediated degradation. As to expression, specifically expressed in heart and skeletal muscle: it is present in differentiated myotubes but not in myoblasts.

It is found in the cytoplasm. The protein localises to the nucleus. In terms of biological role, cardiac- and muscle-specific transcription factor. May act to regulate the expression of genes involved in the development of myotubes. Plays a critical role in ventricular cardiomyocyte expansion and regulates postnatal skeletal muscle growth and regeneration. Involved in the organized assembly of thick and thin filaments of myofibril sarcomeres. This is Nascent polypeptide-associated complex subunit alpha, muscle-specific form (Naca) from Mus musculus (Mouse).